The following is a 212-amino-acid chain: Phosphoribosyl-dephospho-CoA transferase (212 aa).

Active-site residues include aspartate 139 and aspartate 141.

This sequence belongs to the MdcG family.

The enzyme catalyses apo-[malonate decarboxylase ACP] + 2'-(5''-triphospho-alpha-D-ribosyl)-3'-dephospho-CoA = holo-[malonate decarboxylase ACP] + diphosphate. Transfers 2'-(5-triphosphoribosyl)-3'-dephosphocoenzyme-A to the apo-[acyl-carrier-protein] of the malonate decarboxylase to yield holo-[acyl-carrier-protein]. The protein is Phosphoribosyl-dephospho-CoA transferase of Azotobacter vinelandii (strain DJ / ATCC BAA-1303).